A 466-amino-acid polypeptide reads, in one-letter code: Cytochrome c-552 (466 aa).

The N-terminal stretch at 1-27 (MVRNLTKKSFALSALVAASLMASGVMA) is a signal peptide. Histidine 87 contacts heme c. Heme is bound by residues cysteine 115, cysteine 118, and lysine 119. Residues cysteine 153, cysteine 156, histidine 157, cysteine 195, cysteine 198, and histidine 199 each contribute to the heme c site. Residues glutamate 201, tyrosine 202, lysine 250, and glutamine 252 each coordinate Ca(2+). A substrate-binding site is contributed by tyrosine 202. Histidine 253 contacts substrate. The heme c site is built by histidine 264, cysteine 271, cysteine 274, histidine 275, histidine 290, cysteine 303, cysteine 306, histidine 307, and histidine 382.

The protein belongs to the cytochrome c-552 family. Ca(2+) is required as a cofactor. Requires heme c as cofactor.

It is found in the periplasm. The catalysed reaction is 6 Fe(III)-[cytochrome c] + NH4(+) + 2 H2O = 6 Fe(II)-[cytochrome c] + nitrite + 8 H(+). The protein operates within nitrogen metabolism; nitrate reduction (assimilation). Functionally, catalyzes the reduction of nitrite to ammonia, consuming six electrons in the process. The sequence is that of Cytochrome c-552 from Shewanella sediminis (strain HAW-EB3).